We begin with the raw amino-acid sequence, 545 residues long: MAKDIYFNEDARKSLLSGVEKLSNAVKVTLGPKGRNVLIDKKFGSPTVTKDGVSVAREIELENPFENMGAQLLKEVAIKTNDVAGDGTTTATVLAYAIAREGLKNVSSGINPIGIKKGIDHAVNLAAEKIRQSAKKITTKEEIAQVASISANNDSYIGEKIAEAMDKVGKDGVITVEESKTFDTTISYVEGMQFDRGYLSPYFSTNKENMSVSFDDAFILIYEKKISSIKELLPVLEKVLGTNKPLLIIAEDIEGDALAALVLNSVRGALKVCAIKSPGFGDRRKAMLEDIAVLTGGVLISEELGITLETVEIEQLGQAKTIKVDKDNTTIINTGNKEQIKERSELIKKQIEDSTSEYDKEKLQERLAKLVGGVAVINVGAVTEVELKEKKHRVEDALSATRAAVEEGVVPGGGSTLIEVAMYLDTIDTSKLSYEEKQGFEIVKRSLEEPMRQIISNAGFEGSIYIHQIKTEKKGLGFDASSFKWVNMIESGIIDPAKVTRSALQNAASIAGLLLTTECAITDIKEEKNTSGGGGYPMDPGMGMM.

ATP-binding positions include 29–32, Lys50, 86–90, Gly413, and Asp495; these read TLGP and DGTTT.

The protein belongs to the chaperonin (HSP60) family. Forms a cylinder of 14 subunits composed of two heptameric rings stacked back-to-back. Interacts with the co-chaperonin GroES.

It is found in the cytoplasm. The catalysed reaction is ATP + H2O + a folded polypeptide = ADP + phosphate + an unfolded polypeptide.. In terms of biological role, together with its co-chaperonin GroES, plays an essential role in assisting protein folding. The GroEL-GroES system forms a nano-cage that allows encapsulation of the non-native substrate proteins and provides a physical environment optimized to promote and accelerate protein folding. This chain is Chaperonin GroEL, found in Borrelia garinii subsp. bavariensis (strain ATCC BAA-2496 / DSM 23469 / PBi) (Borreliella bavariensis).